A 310-amino-acid polypeptide reads, in one-letter code: Membrane protein insertase YidC 2 (310 aa).

An N-terminal signal peptide occupies residues 1 to 23 (MKKIYKRLLFSGLALSMLFFLSG). C24 carries the N-palmitoyl cysteine lipid modification. C24 carries S-diacylglycerol cysteine lipidation. The next 5 membrane-spanning stretches (helical) occupy residues 34-54 (GEGW…QYLA), 57-77 (LGLG…LLIL), 136-156 (FGGL…ALYI), 180-200 (IITV…TLSV), and 220-240 (VMIS…SGIF). The disordered stretch occupies residues 263–310 (EFKKNPPKPFKSNARKDITPQANNDKKLITSKKQKSNRNAGKQRHHKQ). Positions 276–290 (ARKDITPQANNDKKL) are enriched in basic and acidic residues. The segment covering 291–310 (ITSKKQKSNRNAGKQRHHKQ) has biased composition (basic residues).

It belongs to the OXA1/ALB3/YidC family. Type 2 subfamily.

The protein localises to the cell membrane. Required for the insertion and/or proper folding and/or complex formation of integral membrane proteins into the membrane. Involved in integration of membrane proteins that insert both dependently and independently of the Sec translocase complex, as well as at least some lipoproteins. Partially complements an E.coli yidC depletion experiment. The chain is Membrane protein insertase YidC 2 (yidC2) from Streptococcus mutans serotype c (strain ATCC 700610 / UA159).